We begin with the raw amino-acid sequence, 228 residues long: CD9 antigen (228 aa).

Residues 2–12 (PVKGGTKCIKY) are Cytoplasmic-facing. Cys-9 carries the S-palmitoyl cysteine lipid modification. A helical transmembrane segment spans residues 13 to 33 (LLFGFNFIFWLAGIAVLAIGL). Residues 34 to 55 (WLRFDSQTKSIFEQETNNNNSS) lie on the Extracellular side of the membrane. N-linked (GlcNAc...) asparagine glycans are attached at residues Asn-52 and Asn-53. Residues 56–76 (FYTGVYILIGAGALMMLVGFL) traverse the membrane as a helical segment. The Cytoplasmic portion of the chain corresponds to 77 to 87 (GCCGAVQESQC). 3 S-palmitoyl cysteine lipidation sites follow: Cys-78, Cys-79, and Cys-87. The helical transmembrane segment at 88 to 111 (MLGLFFGFLLVIFAIEIAAAIWGY) threads the bilayer. The Extracellular segment spans residues 112 to 195 (SHKDEVIKEV…KEVFDNKFHI (84 aa)). 2 disulfide bridges follow: Cys-152/Cys-181 and Cys-153/Cys-167. A helical transmembrane segment spans residues 196 to 221 (IGAVGIGIAVVMIFGMIFSMILCCAI). Residues Cys-218 and Cys-219 are each lipidated (S-palmitoyl cysteine). Over 222 to 228 (RRNREMV) the chain is Cytoplasmic.

The protein belongs to the tetraspanin (TM4SF) family. In terms of assembly, forms both disulfide-linked homodimers and higher homooligomers as well as heterooligomers with other members of the tetraspanin family. Interacts (via the second extracellular domain) with integrin ITGAV:ITGB3. Interacts with integrin ITGA6:ITGB1; interaction takes place in oocytes and is involved in sperm-egg fusion. Part of integrin-tetraspanin complexes composed of CD81, beta-1 and beta-2 integrins in the membrane of monocyte/macrophages. Interacts with CD63; identified in a complex with CD63 and ITGB3. Associates with CR2/CD21 and with PTGFRN/CD9P1. Part of a complex composed of CD9, CD81, PTGFRN and IGSF8. Interacts directly with IGSF8. Interacts with PDPN; this interaction is homophilic and attenuates platelet aggregation and pulmonary metastasis induced by PDPN. Interacts (on T cell side) with CD81 at immunological synapses between antigen-presenting cells and T cells. In terms of processing, palmitoylated at a low, basal level in unstimulated platelets. The level of palmitoylation increases when platelets are activated by thrombin (in vitro). The protein exists in three forms with molecular masses between 22 and 27 kDa, and is known to carry covalently linked fatty acids. Palmitoylation by ZDHHC2 regulates CD9 expression, association with other tetraspanin family proteins and function in cell adhesion. Detected in platelets (at protein level). Expressed by a variety of hematopoietic and epithelial cells.

The protein localises to the cell membrane. It is found in the membrane. The protein resides in the secreted. Its subcellular location is the extracellular exosome. Functionally, integral membrane protein associated with integrins, which regulates different processes, such as sperm-egg fusion, platelet activation and aggregation, and cell adhesion. Present at the cell surface of oocytes and plays a key role in sperm-egg fusion, possibly by organizing multiprotein complexes and the morphology of the membrane required for the fusion. In myoblasts, associates with CD81 and PTGFRN and inhibits myotube fusion during muscle regeneration. In macrophages, associates with CD81 and beta-1 and beta-2 integrins, and prevents macrophage fusion into multinucleated giant cells specialized in ingesting complement-opsonized large particles. Also prevents the fusion between mononuclear cell progenitors into osteoclasts in charge of bone resorption. Acts as a receptor for PSG17. Involved in platelet activation and aggregation. Regulates paranodal junction formation. Involved in cell adhesion, cell motility and tumor metastasis. In Homo sapiens (Human), this protein is CD9 antigen.